We begin with the raw amino-acid sequence, 166 residues long: Glutamyl-tRNA(Gln) amidotransferase subunit C-2, mitochondrial (166 aa).

Belongs to the GatC family. Subunit of the heterotrimeric GatCAB amidotransferase (AdT) complex, composed of A, B and C subunits.

The protein resides in the mitochondrion. The catalysed reaction is L-glutamyl-tRNA(Gln) + L-glutamine + ATP + H2O = L-glutaminyl-tRNA(Gln) + L-glutamate + ADP + phosphate + H(+). In terms of biological role, allows the formation of correctly charged Gln-tRNA(Gln) through the transamidation of misacylated Glu-tRNA(Gln) in the mitochondria. The reaction takes place in the presence of glutamine and ATP through an activated gamma-phospho-Glu-tRNA(Gln). The chain is Glutamyl-tRNA(Gln) amidotransferase subunit C-2, mitochondrial from Culex quinquefasciatus (Southern house mosquito).